Reading from the N-terminus, the 813-residue chain is Leucine--tRNA ligase (813 aa).

Residues 41 to 51 carry the 'HIGH' region motif; the sequence is PYPSGTLHMGH. Residues 575–579 carry the 'KMSKS' region motif; it reads KMSKS. Residue Lys578 participates in ATP binding.

The protein belongs to the class-I aminoacyl-tRNA synthetase family.

Its subcellular location is the cytoplasm. The catalysed reaction is tRNA(Leu) + L-leucine + ATP = L-leucyl-tRNA(Leu) + AMP + diphosphate. The protein is Leucine--tRNA ligase of Francisella tularensis subsp. holarctica (strain FTNF002-00 / FTA).